The sequence spans 402 residues: Sulfate adenylyltransferase (402 aa).

The protein belongs to the sulfate adenylyltransferase family.

The enzyme catalyses sulfate + ATP + H(+) = adenosine 5'-phosphosulfate + diphosphate. Its pathway is sulfur metabolism; hydrogen sulfide biosynthesis; sulfite from sulfate: step 1/3. This chain is Sulfate adenylyltransferase, found in Thiobacillus denitrificans (strain ATCC 25259 / T1).